A 153-amino-acid polypeptide reads, in one-letter code: Large ribosomal subunit protein uL22 (153 aa).

Residues 110–153 are disordered; sequence ITVIVESRPPKQKGASAASARSRRAQGSKAAATKKSAETKEGSE. Over residues 144–153 the composition is skewed to basic and acidic residues; sequence KSAETKEGSE.

It belongs to the universal ribosomal protein uL22 family. Part of the 50S ribosomal subunit.

In terms of biological role, this protein binds specifically to 23S rRNA; its binding is stimulated by other ribosomal proteins, e.g. L4, L17, and L20. It is important during the early stages of 50S assembly. It makes multiple contacts with different domains of the 23S rRNA in the assembled 50S subunit and ribosome. The globular domain of the protein is located near the polypeptide exit tunnel on the outside of the subunit, while an extended beta-hairpin is found that lines the wall of the exit tunnel in the center of the 70S ribosome. The chain is Large ribosomal subunit protein uL22 from Mycolicibacterium smegmatis (strain ATCC 700084 / mc(2)155) (Mycobacterium smegmatis).